Here is a 266-residue protein sequence, read N- to C-terminus: Very-long-chain aldehyde decarbonylase GL1-11 (266 aa).

4 consecutive transmembrane segments (helical) span residues 25–45 (VVTF…SLLF), 74–94 (ILYH…AFKF), 106–126 (WTVI…IFYW), and 163–183 (ILFL…HLFT). A Fatty acid hydroxylase domain is found at 113-248 (VLFYFVLEDF…FVYMDWLFGT (136 aa)).

Belongs to the sterol desaturase family. As to quaternary structure, homodimer.

Its subcellular location is the endoplasmic reticulum membrane. It catalyses the reaction a long-chain fatty aldehyde + 2 NADPH + O2 + H(+) = a long-chain alkane + formate + 2 NADP(+) + H2O. In terms of biological role, aldehyde decarbonylase involved in the conversion of aldehydes to alkanes. Core component of a very-long-chain alkane synthesis complex. The polypeptide is Very-long-chain aldehyde decarbonylase GL1-11 (Oryza sativa subsp. indica (Rice)).